The following is a 331-amino-acid chain: 6-phosphogluconolactonase (331 aa).

This sequence belongs to the cycloisomerase 2 family.

The enzyme catalyses 6-phospho-D-glucono-1,5-lactone + H2O = 6-phospho-D-gluconate + H(+). It participates in carbohydrate degradation; pentose phosphate pathway; D-ribulose 5-phosphate from D-glucose 6-phosphate (oxidative stage): step 2/3. Its function is as follows. Catalyzes the hydrolysis of 6-phosphogluconolactone to 6-phosphogluconate. The sequence is that of 6-phosphogluconolactonase from Salmonella typhi.